Consider the following 313-residue polypeptide: Solute carrier family 35 member E3 (313 aa).

9 helical membrane-spanning segments follow: residues 17 to 37 (GLLF…WIYV), 40 to 60 (GFPN…GLYI), 77 to 97 (LLLL…SLQN), 126 to 143 (FSTR…GVIL), 153 to 173 (FLGM…QVWV), 187 to 206 (LLYY…VPFF), 225 to 245 (LMVL…YWII), 252 to 272 (TYNM…YVLF), and 275 to 295 (PLSI…LAYT).

This sequence belongs to the TPT transporter family. SLC35E subfamily.

It localises to the membrane. In terms of biological role, putative transporter. This Homo sapiens (Human) protein is Solute carrier family 35 member E3 (SLC35E3).